The sequence spans 207 residues: Serotonin N-acetyltransferase (207 aa).

Residues 1 to 28 (MSMQSTHPPKPEAPRLPPGIPESPSCQR) are disordered. Threonine 31 bears the Phosphothreonine; by PKA mark. One can recognise an N-acetyltransferase domain in the interval 35-202 (SEFRCLTPED…CSLRDHPFLR (168 aa)). Residue leucine 124 coordinates substrate. Residues 124-126 (LAV) and 132-137 (QQGRGP) contribute to the acetyl-CoA site. Methionine 159 serves as a coordination point for substrate. Position 168–170 (168–170 (YER)) interacts with acetyl-CoA. Residue serine 205 is modified to Phosphoserine.

Belongs to the acetyltransferase family. AANAT subfamily. Monomer. Interacts with several 14-3-3 proteins, including YWHAB, YWHAE, YWHAG and YWHAZ, preferentially when phosphorylated at Thr-31. Phosphorylation on Ser-205 also allows binding to YWHAZ, but with lower affinity. The interaction with YWHAZ considerably increases affinity for arylalkylamines and acetyl-CoA and protects the enzyme from dephosphorylation and proteasomal degradation. It may also prevent thiol-dependent inactivation. Post-translationally, cAMP-dependent phosphorylation on both N-terminal Thr-31 and C-terminal Ser-205 regulates AANAT activity by promoting interaction with 14-3-3 proteins.

It localises to the cytoplasm. The enzyme catalyses a 2-arylethylamine + acetyl-CoA = an N-acetyl-2-arylethylamine + CoA + H(+). Its pathway is aromatic compound metabolism; melatonin biosynthesis; melatonin from serotonin: step 1/2. Controls the night/day rhythm of melatonin production in the pineal gland. Catalyzes the N-acetylation of serotonin into N-acetylserotonin, the penultimate step in the synthesis of melatonin. This Pan troglodytes (Chimpanzee) protein is Serotonin N-acetyltransferase (AANAT).